Consider the following 555-residue polypeptide: GPI-anchor transamidase component PIGS (555 aa).

The Cytoplasmic segment spans residues 2–18 (AATGAAATDLEVVRGKR). A cardiolipin contacts are provided by arginine 15 and arginine 18. The chain crosses the membrane as a helical span at residues 19-39 (AALFFATVVIVLGLPLWWKTT). At 40–517 (ETYRAPLPYS…LHLLYFPDDQ (478 aa)) the chain is on the lumenal side. 2 N-linked (GlcNAc...) asparagine glycosylation sites follow: asparagine 267 and asparagine 370. Residues 518 to 532 (KFAIYIPLFLPMAVP) traverse the membrane as a helical segment. The Cytoplasmic portion of the chain corresponds to 533 to 555 (ILLSLFKIFLETRKSWKKPEKTD).

The protein belongs to the PIGS family. Heteropentamer. Part of the GPI-anchor transamidase complex, consisting of PIGK, PIGT, PIGS, PIGU and GAA1.

It is found in the endoplasmic reticulum membrane. It participates in glycolipid biosynthesis; glycosylphosphatidylinositol-anchor biosynthesis. Functionally, component of the glycosylphosphatidylinositol-anchor (GPI-anchor) transamidase (GPI-T) complex that catalyzes the formation of the linkage between a proprotein and a GPI-anchor and participates in GPI anchored protein biosynthesis. This chain is GPI-anchor transamidase component PIGS, found in Bos taurus (Bovine).